Reading from the N-terminus, the 678-residue chain is Proprotein convertase subtilisin/kexin type 4 (678 aa).

Positions 1–26 are cleaved as a signal peptide; sequence MRPSQTALWLGLVLSLALLAVGWASA. Residues 27–110 constitute a propeptide that is removed on maturation; that stretch reads RPPIYVSSWA…QQTLRRRVKR (84 aa). Residues 123-437 form the Peptidase S8 domain; it reads QWYMNKEIEQ…YGLLDAGLLV (315 aa). Residues D155, H196, and S370 each act as charge relay system in the active site. The P/Homo B domain maps to 446 to 580; it reads TKPQKKCTIR…TLLLYGTAED (135 aa). N472 is a glycosylation site (N-linked (GlcNAc...) asparagine).

This sequence belongs to the peptidase S8 family. Furin subfamily. In terms of assembly, the proPCSK4 form interacts with HSPA5; the interaction takes place at the endoplasmic reticulum. N-glycosylated. Post-translationally, synthesized in the endoplasmic reticulum as a zymogen, is matured by autocatalytic cleavage between the prodomain and the catalytic domain. In terms of tissue distribution, expressed abundantly in the testis. High levels seen in germ cells but not in Leydig, Sertoli or peritubular cells. Expressed in the pachytene spermatocytes and the round spermatids but not in the elongating spermatids. May be expressed within hormonally stimulated ovaries.

The protein localises to the cytoplasmic vesicle. Its subcellular location is the secretory vesicle. It localises to the acrosome membrane. Functionally, proprotein convertase involved in the processing of hormone and other protein precursors at sites comprised of pairs of basic amino acid residues. In males, important for ADAM2 processing as well as other acrosomal proteins with roles in fertilization and critical for normal fertilization events such as sperm capacitation, acrosome reaction and binding of sperm to zona pellucida. Plays also a role in female fertility, involved in the regulation of trophoblast migration and placental development, may be through the proteolytical processing and activation of proteins such as IGF2. May also participate in folliculogenesis in the ovaries. This Rattus norvegicus (Rat) protein is Proprotein convertase subtilisin/kexin type 4 (Pcsk4).